The chain runs to 112 residues: Protein FAM32A (112 aa).

Positions 15–35 (KGCGDMSLGKKKKKKNKANDQ) are disordered.

Belongs to the FAM32 family.

The protein resides in the nucleus. Functionally, may induce G2 arrest and apoptosis. May also increase cell sensitivity to apoptotic stimuli. This is Protein FAM32A (fam32a) from Xenopus tropicalis (Western clawed frog).